The following is a 246-amino-acid chain: Exosome complex component Rrp41 (246 aa).

Belongs to the RNase PH family. Rrp41 subfamily. In terms of assembly, component of the archaeal exosome complex. Forms a hexameric ring-like arrangement composed of 3 Rrp41-Rrp42 heterodimers. The hexameric ring associates with a trimer of Rrp4 and/or Csl4 subunits.

It localises to the cytoplasm. Its function is as follows. Catalytic component of the exosome, which is a complex involved in RNA degradation. Has 3'-&gt;5' exoribonuclease activity. Can also synthesize heteromeric RNA-tails. This Pyrobaculum calidifontis (strain DSM 21063 / JCM 11548 / VA1) protein is Exosome complex component Rrp41.